A 732-amino-acid chain; its full sequence is Ferric aerobactin receptor (732 aa).

The N-terminal stretch at 1-25 (MMISKKYTLWALNPLLLTMMAPAVA) is a signal peptide. The TonB box motif lies at 31–38 (ETFVVSAN). The 111-residue stretch at 43–153 (TVAEMAQTTW…TGGLINIVTK (111 aa)) folds into the TBDR plug domain. One can recognise a TBDR beta-barrel domain in the interval 158 to 732 (ETMMEFEAGT…TFGLNYSVLF (575 aa)). The TonB C-terminal box signature appears at 715–732 (YDYKGRGRTFGLNYSVLF).

It belongs to the TonB-dependent receptor family.

Its subcellular location is the cell outer membrane. Its function is as follows. Receptor for cloacin DF13/aerobactin. This is Ferric aerobactin receptor (iutA) from Escherichia coli.